The following is a 400-amino-acid chain: PHD finger protein 24 (400 aa).

The N-myristoyl glycine moiety is linked to residue glycine 2. The disordered stretch occupies residues 30-108 (DRPSIRRTGE…FTPPAFIRPT (79 aa)). An Omega-N-methylarginine modification is found at arginine 36. The residue at position 43 (serine 43) is a Phosphoserine. Threonine 47 is subject to Phosphothreonine. At serine 51 the chain carries Phosphoserine. The span at 78–97 (AWERLRDGRGVEPEEFDRTG) shows a compositional bias: basic and acidic residues. The PHD-type zinc-finger motif lies at 129 to 190 (NDEMCDVCEV…TGWSCHYCDN (62 aa)).

The chain is PHD finger protein 24 from Pongo abelii (Sumatran orangutan).